The primary structure comprises 509 residues: Angiopoietin-4 (509 aa).

Positions 1 to 21 (MLCQPAMLLDGLLLLATMAAA) are cleaved as a signal peptide. Residues Asn-105, Asn-135, Asn-149, Asn-167, Asn-256, Asn-306, Asn-317, and Asn-417 are each glycosylated (N-linked (GlcNAc...) asparagine). Residues 181-269 (LSTNKLERQM…LQQQQQQLTE (89 aa)) are a coiled coil. The region spanning 288-508 (KTPKPVFQDC…GTRMMLRPMG (221 aa)) is the Fibrinogen C-terminal domain. A disulfide bond links Cys-297 and Cys-326. The interval 416–436 (VNDSSSSAGRKNSLAPQGTKF) is disordered. Residues Cys-450 and Cys-463 are joined by a disulfide bond.

In terms of assembly, homodimer; disulfide-linked. Interacts with TEK/TIE2. As to expression, widely expressed.

The protein resides in the secreted. In terms of biological role, binds to TEK/TIE2, modulating ANGPT1 signaling. Can induce tyrosine phosphorylation of TEK/TIE2. Promotes endothelial cell survival, migration and angiogenesis. This chain is Angiopoietin-4 (Angpt4), found in Mus musculus (Mouse).